Reading from the N-terminus, the 147-residue chain is Hemoglobin subunit beta (147 aa).

In terms of domain architecture, Globin spans 3–147 (HWSCEEKQFI…VAHALALGYH (145 aa)). Heme b contacts are provided by His-64 and His-93.

The protein belongs to the globin family. Heterotetramer of two alpha-D chains and two beta chains. As to expression, red blood cells.

Functionally, involved in oxygen transport from the lung to the various peripheral tissues. This is Hemoglobin subunit beta (HBB) from Chelonoidis carbonarius (Red-footed tortoise).